Here is a 227-residue protein sequence, read N- to C-terminus: Cytochrome c oxidase subunit 2 (227 aa).

Topologically, residues 1 to 14 (MAYPFQLGLQDATS) are mitochondrial intermembrane. A helical transmembrane segment spans residues 15-45 (PIMEELTNFHDHTLMIVFLISSLVLYIISLM). Residues 46-59 (LTTKLTHTSTMDAQ) lie on the Mitochondrial matrix side of the membrane. A helical transmembrane segment spans residues 60–87 (EVETIWTILPAVILILIALPSLRILYMM). The Mitochondrial intermembrane portion of the chain corresponds to 88–227 (DEINNPVLTV…YFENWSASMI (140 aa)). Histidine 161, cysteine 196, glutamate 198, cysteine 200, histidine 204, and methionine 207 together coordinate Cu cation. Position 198 (glutamate 198) interacts with Mg(2+). Phosphotyrosine is present on tyrosine 218.

It belongs to the cytochrome c oxidase subunit 2 family. As to quaternary structure, component of the cytochrome c oxidase (complex IV, CIV), a multisubunit enzyme composed of 14 subunits. The complex is composed of a catalytic core of 3 subunits MT-CO1, MT-CO2 and MT-CO3, encoded in the mitochondrial DNA, and 11 supernumerary subunits COX4I, COX5A, COX5B, COX6A, COX6B, COX6C, COX7A, COX7B, COX7C, COX8 and NDUFA4, which are encoded in the nuclear genome. The complex exists as a monomer or a dimer and forms supercomplexes (SCs) in the inner mitochondrial membrane with NADH-ubiquinone oxidoreductase (complex I, CI) and ubiquinol-cytochrome c oxidoreductase (cytochrome b-c1 complex, complex III, CIII), resulting in different assemblies (supercomplex SCI(1)III(2)IV(1) and megacomplex MCI(2)III(2)IV(2)). Found in a complex with TMEM177, COA6, COX18, COX20, SCO1 and SCO2. Interacts with TMEM177 in a COX20-dependent manner. Interacts with COX20. Interacts with COX16. It depends on Cu cation as a cofactor.

Its subcellular location is the mitochondrion inner membrane. The enzyme catalyses 4 Fe(II)-[cytochrome c] + O2 + 8 H(+)(in) = 4 Fe(III)-[cytochrome c] + 2 H2O + 4 H(+)(out). Component of the cytochrome c oxidase, the last enzyme in the mitochondrial electron transport chain which drives oxidative phosphorylation. The respiratory chain contains 3 multisubunit complexes succinate dehydrogenase (complex II, CII), ubiquinol-cytochrome c oxidoreductase (cytochrome b-c1 complex, complex III, CIII) and cytochrome c oxidase (complex IV, CIV), that cooperate to transfer electrons derived from NADH and succinate to molecular oxygen, creating an electrochemical gradient over the inner membrane that drives transmembrane transport and the ATP synthase. Cytochrome c oxidase is the component of the respiratory chain that catalyzes the reduction of oxygen to water. Electrons originating from reduced cytochrome c in the intermembrane space (IMS) are transferred via the dinuclear copper A center (CU(A)) of subunit 2 and heme A of subunit 1 to the active site in subunit 1, a binuclear center (BNC) formed by heme A3 and copper B (CU(B)). The BNC reduces molecular oxygen to 2 water molecules using 4 electrons from cytochrome c in the IMS and 4 protons from the mitochondrial matrix. The protein is Cytochrome c oxidase subunit 2 of Rattus norvegicus (Rat).